The chain runs to 184 residues: MLIGYVRVSTNDQNTDLQRNALNCAGCELIFEDKISGTKSERPGLKKLLRTLSAGDTLVVWKLDRLGRSMRHLVVLVEELRERGINFRSLTDSIDTSTPMGRFFFHVMGALAEMERELIVERTKAGLETARAQGRIGGRRPKLTPEQWAQAGRLIAAGTPRQKVAIIYDVGVSTLYKRFPAGDK.

A Resolvase/invertase-type recombinase catalytic domain is found at 1 to 134 (MLIGYVRVST…AGLETARAQG (134 aa)). Ser-9 (O-(5'-phospho-DNA)-serine intermediate) is an active-site residue. The H-T-H motif DNA-binding region spans 161–180 (RQKVAIIYDVGVSTLYKRFP).

The protein belongs to the site-specific recombinase resolvase family.

Functionally, this protein catalyzes the inversion of an 1800-bp E.coli DNA fragment, the P region, which can exist in either orientation. The function of the inversion is not yet clear. The chain is Serine recombinase PinE (pinE) from Escherichia coli (strain K12).